Reading from the N-terminus, the 266-residue chain is Gas vesicle protein L (266 aa).

It belongs to the gas vesicle GvpF/GvpL family.

Its subcellular location is the gas vesicle. Its function is as follows. Might be involved in nucleating gas vesicle formation. A minor component of the gas vesicle. Gas vesicles are hollow, gas filled proteinaceous nanostructures found in some microorganisms. It is not clear what function gas vesicles perform in soil bacteria. This is Gas vesicle protein L from Streptomyces sp. (strain CB03234).